Consider the following 393-residue polypeptide: DNA primase large subunit PriL (393 aa).

Cysteine 230, cysteine 339, cysteine 350, and cysteine 356 together coordinate [4Fe-4S] cluster.

This sequence belongs to the eukaryotic-type primase large subunit family. As to quaternary structure, heterodimer of a small subunit (PriS) and a large subunit (PriL). It depends on [4Fe-4S] cluster as a cofactor.

Regulatory subunit of DNA primase, an RNA polymerase that catalyzes the synthesis of short RNA molecules used as primers for DNA polymerase during DNA replication. Stabilizes and modulates the activity of the small subunit, increasing the rate of DNA synthesis, and conferring RNA synthesis capability. The DNA polymerase activity may enable DNA primase to also catalyze primer extension after primer synthesis. May also play a role in DNA repair. Displays gap-filling and strand-displacement activities. The protein is DNA primase large subunit PriL of Pyrococcus abyssi (strain GE5 / Orsay).